The sequence spans 303 residues: Probable 5-dehydro-4-deoxyglucarate dehydratase (303 aa).

The protein belongs to the DapA family.

The enzyme catalyses 5-dehydro-4-deoxy-D-glucarate + H(+) = 2,5-dioxopentanoate + CO2 + H2O. It participates in carbohydrate acid metabolism; D-glucarate degradation; 2,5-dioxopentanoate from D-glucarate: step 2/2. The chain is Probable 5-dehydro-4-deoxyglucarate dehydratase from Azotobacter vinelandii (strain DJ / ATCC BAA-1303).